The sequence spans 548 residues: Copine-2 (548 aa).

2 C2 domains span residues 6–131 and 138–263; these read DGGA…TRPL and PAGK…PLEI. Residues D39, D45, D97, D99, S102, D109, D170, D176, D232, D234, and D240 each coordinate Ca(2+). The linker region stretch occupies residues 247-304; it reads TSVLQMSEARDGVPLEIECINPKKQRKKKSYKNSGIIILRSCKIHRNYSFLDYILGGC. The 203-residue stretch at 305–507 folds into the VWFA domain; it reads QLMFTVGIDF…AARDIVQFVP (203 aa).

The protein belongs to the copine family. It depends on Ca(2+) as a cofactor.

It localises to the cytoplasm. The protein resides in the nucleus. The protein localises to the cell membrane. Its function is as follows. Calcium-dependent phospholipid-binding protein that plays a role in calcium-mediated intracellular processes. Exhibits calcium-dependent cell membrane binding properties. This Mus musculus (Mouse) protein is Copine-2.